Here is a 248-residue protein sequence, read N- to C-terminus: Isoprenyl transferase (248 aa).

Asp-23 is an active-site residue. Mg(2+) is bound at residue Asp-23. Substrate is bound by residues 24–27 (GNGR), Trp-28, Arg-36, His-40, and 68–70 (STE). Residue Asn-71 is the Proton acceptor of the active site. Residues Trp-72, Arg-74, Arg-185, and 191–193 (RIS) contribute to the substrate site. Glu-204 is a Mg(2+) binding site.

The protein belongs to the UPP synthase family. Homodimer. It depends on Mg(2+) as a cofactor.

Catalyzes the condensation of isopentenyl diphosphate (IPP) with allylic pyrophosphates generating different type of terpenoids. The chain is Isoprenyl transferase from Neisseria gonorrhoeae (strain ATCC 700825 / FA 1090).